A 61-amino-acid polypeptide reads, in one-letter code: Small ribosomal subunit protein uS14 (61 aa).

Zn(2+)-binding residues include Cys24, Cys27, Cys40, and Cys43.

The protein belongs to the universal ribosomal protein uS14 family. Zinc-binding uS14 subfamily. In terms of assembly, part of the 30S ribosomal subunit. Contacts proteins S3 and S10. Zn(2+) serves as cofactor.

Its function is as follows. Binds 16S rRNA, required for the assembly of 30S particles and may also be responsible for determining the conformation of the 16S rRNA at the A site. The sequence is that of Small ribosomal subunit protein uS14 from Ureaplasma parvum serovar 3 (strain ATCC 27815 / 27 / NCTC 11736).